A 263-amino-acid chain; its full sequence is Tryptophan synthase alpha chain (263 aa).

Residues Glu51 and Asp62 each act as proton acceptor in the active site.

This sequence belongs to the TrpA family. In terms of assembly, tetramer of two alpha and two beta chains.

It carries out the reaction (1S,2R)-1-C-(indol-3-yl)glycerol 3-phosphate + L-serine = D-glyceraldehyde 3-phosphate + L-tryptophan + H2O. It participates in amino-acid biosynthesis; L-tryptophan biosynthesis; L-tryptophan from chorismate: step 5/5. The alpha subunit is responsible for the aldol cleavage of indoleglycerol phosphate to indole and glyceraldehyde 3-phosphate. This Methanosarcina barkeri (strain Fusaro / DSM 804) protein is Tryptophan synthase alpha chain.